The sequence spans 132 residues: Small ribosomal subunit protein uS8 (132 aa).

This sequence belongs to the universal ribosomal protein uS8 family. In terms of assembly, part of the 30S ribosomal subunit. Contacts proteins S5 and S12.

One of the primary rRNA binding proteins, it binds directly to 16S rRNA central domain where it helps coordinate assembly of the platform of the 30S subunit. This Rhizobium rhizogenes (strain K84 / ATCC BAA-868) (Agrobacterium radiobacter) protein is Small ribosomal subunit protein uS8.